Consider the following 117-residue polypeptide: Small ribosomal subunit protein bS6 (117 aa).

The interval 96 to 117 (HAEGPSVQMQKRDERDSRRERR) is disordered. Residues 105-117 (QKRDERDSRRERR) are compositionally biased toward basic and acidic residues.

It belongs to the bacterial ribosomal protein bS6 family.

Its function is as follows. Binds together with bS18 to 16S ribosomal RNA. This Ruegeria pomeroyi (strain ATCC 700808 / DSM 15171 / DSS-3) (Silicibacter pomeroyi) protein is Small ribosomal subunit protein bS6.